Here is a 37-residue protein sequence, read N- to C-terminus: MSDIN-like toxin proprotein 5 (37 aa).

The propeptide occupies 1 to 10 (MSDINATRLP). The cyclopeptide (Leu-Pro) cross-link spans 11-20 (LFFPPDFRPP). A propeptide spanning residues 21-37 (CVGDADNFTLTRGENLC) is cleaved from the precursor.

It belongs to the MSDIN fungal toxin family. In terms of processing, processed by the macrocyclase-peptidase enzyme POPB to yield a toxic cyclic decapeptide. POPB first removes 10 residues from the N-terminus. Conformational trapping of the remaining peptide forces the enzyme to release this intermediate rather than proceed to macrocyclization. The enzyme rebinds the remaining peptide in a different conformation and catalyzes macrocyclization of the N-terminal 10 residues. As to expression, expressed in basidiocarps.

Its function is as follows. Probable toxin that belongs to the MSDIN-like toxin family responsible for a large number of food poisoning cases and deaths. This Amanita exitialis (Guangzhou destroying angel) protein is MSDIN-like toxin proprotein 5.